We begin with the raw amino-acid sequence, 245 residues long: 1-(5-phosphoribosyl)-5-[(5-phosphoribosylamino)methylideneamino] imidazole-4-carboxamide isomerase (245 aa).

The active-site Proton acceptor is Asp7. The Proton donor role is filled by Asp129.

It belongs to the HisA/HisF family.

The protein resides in the cytoplasm. The catalysed reaction is 1-(5-phospho-beta-D-ribosyl)-5-[(5-phospho-beta-D-ribosylamino)methylideneamino]imidazole-4-carboxamide = 5-[(5-phospho-1-deoxy-D-ribulos-1-ylimino)methylamino]-1-(5-phospho-beta-D-ribosyl)imidazole-4-carboxamide. Its pathway is amino-acid biosynthesis; L-histidine biosynthesis; L-histidine from 5-phospho-alpha-D-ribose 1-diphosphate: step 4/9. The chain is 1-(5-phosphoribosyl)-5-[(5-phosphoribosylamino)methylideneamino] imidazole-4-carboxamide isomerase from Salmonella agona (strain SL483).